Reading from the N-terminus, the 175-residue chain is Early E1A protein (175 aa).

The segment at 40–48 is interaction with RB1 in competition with E2F1; sequence PSLHDLFDL. The short motif at 106 to 110 is the LXCXE motif, interaction with host RB1 element; it reads LLCLE. The segment at 146-164 is a zinc-finger region; the sequence is CLRCAYYQEQGENSICGLC.

Belongs to the adenoviridae E1A protein family. Interacts with host UBE2I; this interaction interferes with polySUMOylation. Interacts with host RB1; this interaction induces the aberrant dissociation of RB1-E2F1 complex thereby disrupting the activity of RB1 and activating E2F1-regulated genes. Interacts with host ATF7; the interaction enhances ATF7-mediated viral transactivation activity which requires the zinc binding domains of both proteins. Isoform early E1A 32 kDa protein and isoform early E1A 26 kDa protein interact (via N-terminus) with CUL1 and E3 ubiquitin ligase RBX1; these interactions inhibit RBX1-CUL1-dependent elongation reaction of ubiquitin chains and attenuate ubiquitination of SCF(FBXW7) target proteins. Interacts (via PXLXP motif) with host ZMYND11/BS69 (via MYND-type zinc finger); this interaction inhibits E1A mediated transactivation. Interacts with host EP300; this interaction stimulates the acetylation of RB1 by recruiting EP300 and RB1 into a multimeric-protein complex. Interacts with host CTBP1 and CTBP2; this interaction seems to potentiate viral replication. Interacts with host DCAF7. Interacts with host DYRK1A. Interacts with host KPNA4; this interaction allows E1A import into the host nucleus. Interacts with host EP400; this interaction stabilizes MYC. Interacts with host TBP protein; this interaction probably disrupts the TBP-TATA complex.

It is found in the host nucleus. In terms of biological role, plays a role in viral genome replication by driving entry of quiescent cells into the cell cycle. Stimulation of progression from G1 to S phase allows the virus to efficiently use the cellular DNA replicating machinery to achieve viral genome replication. E1A protein has both transforming and trans-activating activities. Induces the disassembly of the E2F1 transcription factor from RB1 by direct competition for the same binding site on RB1, with subsequent transcriptional activation of E2F1-regulated S-phase genes and of the E2 region of the adenoviral genome. Release of E2F1 leads to the ARF-mediated inhibition of MDM2 and causes TP53/p53 to accumulate because it is not targeted for degradation by MDM2-mediated ubiquitination anymore. This increase in TP53, in turn, would arrest the cell proliferation and direct its death but this effect is counteracted by the viral protein E1B-55K. Inactivation of the ability of RB1 to arrest the cell cycle is critical for cellular transformation, uncontrolled cellular growth and proliferation induced by viral infection. Interaction with RBX1 and CUL1 inhibits ubiquitination of the proteins targeted by SCF(FBXW7) ubiquitin ligase complex, and may be linked to unregulated host cell proliferation. The tumorigenesis-restraining activity of E1A may be related to the disruption of the host CtBP-CtIP complex through the CtBP binding motif. The protein is Early E1A protein of Canis lupus familiaris (Dog).